Consider the following 869-residue polypeptide: Bifunctional uridylyltransferase/uridylyl-removing enzyme (869 aa).

Residues 1-332 are uridylyltransferase; that stretch reads MTATPADRPD…QFDGEAVPVQ (332 aa). Positions 333-691 are uridylyl-removing; sequence LDAGFSLRRG…RRAVPDNDAL (359 aa). In terms of domain architecture, HD spans 450 to 572; it reads VDQHTLMVLR…VGTRERLDYL (123 aa). ACT domains lie at 692–771 and 798–869; these read EVFV…PSRR and RISL…LDPT.

Belongs to the GlnD family. Requires Mg(2+) as cofactor.

The catalysed reaction is [protein-PII]-L-tyrosine + UTP = [protein-PII]-uridylyl-L-tyrosine + diphosphate. It catalyses the reaction [protein-PII]-uridylyl-L-tyrosine + H2O = [protein-PII]-L-tyrosine + UMP + H(+). With respect to regulation, uridylyltransferase (UTase) activity is inhibited by glutamine, while glutamine activates uridylyl-removing (UR) activity. Modifies, by uridylylation and deuridylylation, the PII regulatory proteins (GlnB and homologs), in response to the nitrogen status of the cell that GlnD senses through the glutamine level. Under low glutamine levels, catalyzes the conversion of the PII proteins and UTP to PII-UMP and PPi, while under higher glutamine levels, GlnD hydrolyzes PII-UMP to PII and UMP (deuridylylation). Thus, controls uridylylation state and activity of the PII proteins, and plays an important role in the regulation of nitrogen assimilation and metabolism. This is Bifunctional uridylyltransferase/uridylyl-removing enzyme from Xanthomonas campestris pv. campestris (strain 8004).